The sequence spans 143 residues: Holo-[acyl-carrier-protein] synthase (143 aa).

The Mg(2+) site is built by Asp-9 and Glu-63.

The protein belongs to the P-Pant transferase superfamily. AcpS family. Requires Mg(2+) as cofactor.

It is found in the cytoplasm. The enzyme catalyses apo-[ACP] + CoA = holo-[ACP] + adenosine 3',5'-bisphosphate + H(+). Transfers the 4'-phosphopantetheine moiety from coenzyme A to a Ser of acyl-carrier-protein. This is Holo-[acyl-carrier-protein] synthase from Burkholderia mallei (strain NCTC 10247).